The sequence spans 129 residues: CD59B glycoprotein (129 aa).

Residues 1–23 (MRAQRGLILLLLLLAVFCSTAVS) form the signal peptide. The region spanning 24 to 107 (LKCYNCLDPV…GLEEPNNAET (84 aa)) is the UPAR/Ly6 domain. 5 disulfide bridges follow: C26/C49, C29/C36, C42/C62, C68/C86, and C87/C92. An N-linked (GlcNAc...) asparagine glycan is attached at N39. N104 carries the GPI-anchor amidated asparagine lipid modification. Positions 105–129 (AETSSLRKTALLGTSVLVAILKFCF) are cleaved as a propeptide — removed in mature form.

In terms of assembly, interacts with T-cell surface antigen CD2. In terms of processing, N- and O-glycosylated. As to expression, widely expressed in the kidneys, brain, lungs, spleen and testis Testis-specific.

The protein localises to the cell membrane. It localises to the secreted. Functionally, potent inhibitor of the complement membrane attack complex (MAC) action, which protects self-cells from damage during complement activation. Acts by binding to the beta-haipins of C8 (C8A and C8B) components of the assembling MAC, forming an intermolecular beta-sheet that prevents incorporation of the multiple copies of C9 required for complete formation of the osmolytic pore. This chain is CD59B glycoprotein, found in Mus musculus (Mouse).